We begin with the raw amino-acid sequence, 234 residues long: uncharacterized protein (234 aa).

Residues 103–211 (LAKKVPFVVC…SHIKIGKSFL (109 aa)) form the tRNA-binding domain.

This is an uncharacterized protein from Mycoplasma pneumoniae (strain ATCC 29342 / M129 / Subtype 1) (Mycoplasmoides pneumoniae).